An 866-amino-acid polypeptide reads, in one-letter code: Protein aubergine (866 aa).

The residue at position 1 (methionine 1) is an N-acetylmethionine. The segment at 1 to 61 is disordered; sequence MNLPPNPVIA…GGGDAQVGPS (61 aa). 4 positions are modified to symmetric dimethylarginine: arginine 11, arginine 13, arginine 15, and arginine 17. Residues 46 to 56 are compositionally biased toward gly residues; it reads ASGGNGGGGDA. Residues 281–390 enclose the PAZ domain; that stretch reads TLYNILSDAI…IIPELARATG (110 aa). A Piwi domain is found at 555 to 852; it reads IVMVVMRSPN…LAFLVAESIN (298 aa).

This sequence belongs to the argonaute family. Piwi subfamily. As to quaternary structure, component of the ping-pong piRNA processing (4P) complex consisting of krimp, aub and AGO3. Interacts (via N-terminus when symmetrically dimethylated on arginine residues) with krimp (via tudor domain); this interaction requires methylation of at least one N-terminal arginie residue. Interacts with vas and AGO3. May form part of a piRNA processing complex consisting of tud, aub and AGO3. Interacts (when symmetrically dimethylated on arginine residues) with tud; methylation and/or interaction requires association with piRNA. Interacts (via N-terminus and when associated with piRNA) with csul/PRMT5; the interaction recruits the PRMT5 methylosome complex to modify N-terminal arginines by symmetrical dimethylation but involves residues other than the arginines to be modified. Forms a complex with smg, twin, AGO3, nanos mRNA and piRNAs that targets the nanos 3'-untranslated region, in early embryos. Interacts with nanos mRNA and rump (in an RNA-dependent manner). Interacts with papi and vret. Interacts with me31B. Post-translationally, symmetrical dimethylation of arginines (sDMA) on Arg-11, Arg-13 and/or Arg-15 by csul/PRMT5/DART5, is required for binding to tud, localization to the pole plasm and association with the correct piRNAs. SDMA on Arg-11, Arg-13, Arg-15 and/or Arg-17 is required for binding to krimp and stable recruitment to subregions of the nuage. Methylation state does not affect protein stability. SDMA plays an important role in ping-pong amplification of piRNAs and is essential for function in vivo. Methylation state functions as an indicator of its piRNA binding state. PiRNA binding promotes sDMA modification; piRNA binding induces a conformational change that exposes the N-terminal arginines, making them available to the methylosome complex. As to expression, expressed in ovary. In the germarium, found in germline stem and cyst cells. In egg chambers from stage 6, expressed both in nurse cells and oocytes. In embryos, accumulates in the pole cells, although low expression is detected throughout the entire embryo. In testis, expressed in germline stem cells, gonialblast and spermatogonia cells (at protein level). In the adult brain, expressed in the ellipsoid body, the mushroom body subdivision in the peduncle and the cell body layer. Expressed specifically in alpha'/beta' and gamma neurons.

It is found in the cytoplasm. The protein localises to the cytosol. The protein resides in the perinuclear region. Its subcellular location is the cytoplasmic ribonucleoprotein granule. Component of the perinuclear meiotic nuage, a germline-specific subcellular membraneless ribonucleoprotein compartment involved in production of transposable element-repressing Piwi-interacting RNA (piRNA)-induced silencing complexes (piRISCs), which are essential for maintaining germline integrity during oogenesis; essential for the formation and/or structural integrity of nuage particles. Acts via the Piwi-interacting RNA (piRNA) metabolic process, which mediates the repression of transposable elements during meiosis by forming complexes composed of piRNAs and Piwi proteins and governs the methylation and subsequent repression of transposons. Directly binds piRNAs, a class of 24 to 30 nucleotide RNAs that are generated by a Dicer-independent mechanism and are primarily derived from transposons and other repeated sequence elements. Shows RNA cleavage or slicer activity; including aub-piRNA complexes from ovary and testis. When loaded with guide piRNAs recognizes and cleaves complementary RNAs to repress their expression and produce complementary piRNAs. Together with Piwi protein AGO3 recruited to subregions of the perinuclear nuage by krimp, which coordinates their activity in the ping-pong amplification step of secondary piRNA biogenesis. Krimp recruits piRNA bound aub and unbound AGO3, bringing them into close proximity to facilitate the loading onto AGO3 of freshly cut piRNAs generated by aub cleavage of target sequences; krimp recognizes the piRNA loading state of the Piwi proteins via symmetrically dimethylated arginine modification in their N-terminus. Important for asymmetric ping-pong amplification to bias production towards antisense piRNAs capable of silencing transposable elements. Required for the localization of mael and krimp to the meiotic nuage. In ovary, associates predominantly with antisense piRNAs that contain uridine at their 5' end. In testis, associates with Su(Ste) antisense piRNAs (most abundant class of piRNAs found in complex with aub in testes) and negatively regulates Ste expression, most likely by cleaving its transcripts. Also in testis, may repress translation of vas when associated with a piRNA derived from chromosome X, termed AT-chX-1, whose sequence shows strong complementarity to vas mRNA. Involved in repression of long interspersed nuclear elements (LINEs) including HeT-A, I-element and TART LINEs. Repression of specialized telomeric retroelements HeT-A and TART is involved in telomere regulation; Drosophila telomeres being maintained by transposition of specialized telomeric retroelements. Also involved in telomeric trans-silencing, a repression mechanism by which a transposon or a transgene inserted in subtelomeric heterochromatin has the capacity to repress in trans, in the female germline, a homologous transposon, or transgene located in euchromatin. Involved in the suppression of meiotic drive of sex chromosomes and autosomes. Involved in transposon silencing in the adult brain. Required for dorsal-ventral as well as anterior-posterior patterning of the egg. Required during oogenesis for primordial germ cell formation and activation of RNA interference. During early oogenesis, required for osk mRNA silencing and polarization of the microtubule cytoskeleton. During mid-oogenesis, required for osk mRNA localization to the posterior pole and efficient translation of osk and grk. During embryogenesis, required for posterior localization of nanos (nos) mRNA, independently of osk, and pole cell formation. Forms a complex with smg, twin, AGO3 and specific piRNAs that targets nanos mRNA (and probably other maternal mRNAS) for deadenylation promoting its decay during early embryogenesis. The polypeptide is Protein aubergine (Drosophila melanogaster (Fruit fly)).